Consider the following 430-residue polypeptide: Putative chloroquine resistance transporter (430 aa).

Positions 1-22 are disordered; the sequence is MLKEGSSLDLSASSSSGTLRSD. At 1 to 53 the chain is on the cytoplasmic side; it reads MLKEGSSLDLSASSSSGTLRSDNSFGNSPLDRITSLLILIYKSIRACFKWIYS. Residues 7–21 show a composition bias toward low complexity; it reads SLDLSASSSSGTLRS. Residues 54–74 traverse the membrane as a helical segment; that stretch reads KSFGIICILFVILDVLTTVFF. Residues 75–88 are Vacuolar-facing; that stretch reads KRFIDHTKNYVMFT. The helical transmembrane segment at 89-109 threads the bilayer; that stretch reads IQVIIFTFWIIVCCIAILCFL. Residues 110–122 lie on the Cytoplasmic side of the membrane; sequence FNREYMKRHFNVR. The chain crosses the membrane as a helical span at residues 123–143; the sequence is PLVFLGFLDMLSTGLSANGSA. Over 144-147 the chain is Vacuolar; that stretch reads HTSG. A helical membrane pass occupies residues 148–168; sequence LMLVLLGQISVPLTMVSCKLI. Residues 169–173 are Cytoplasmic-facing; sequence LSKKY. The helical transmembrane segment at 174-194 threads the bilayer; that stretch reads HHYQYISSAIILTFAVLKPIL. N-linked (GlcNAc...) asparagine glycosylation occurs at N195. Topologically, residues 195–206 are vacuolar; that stretch reads NRTDTTDNRFYN. Residues 207–223 traverse the membrane as a helical segment; sequence NMLYLLASVPDSIASAL. Residues 224–239 lie on the Cytoplasmic side of the membrane; sequence REKQYTSKFFHVVKYQ. The helical transmembrane segment at 240-260 threads the bilayer; that stretch reads FFGFLFHFFYNILYTLLFTLP. Residues 261–306 are Vacuolar-facing; sequence FNSVKGYFDSLYKLCVNGYKCIFFGVNTITENCGPTLIPTCDNCLE. Cystine bridges form between C281–C304 and C293–C301. A helical membrane pass occupies residues 307–329; sequence AFKIYCLYILFSSAIRVAYVFIM. At 330–335 the chain is on the cytoplasmic side; the sequence is LDGSVT. Residues 336-358 traverse the membrane as a helical segment; the sequence is FTLLLGTVKVPLTSIAFSLRFIA. The Vacuolar portion of the chain corresponds to 359–364; that stretch reads GDSTTS. The chain crosses the membrane as a helical span at residues 365–385; the sequence is FNLLDVVCFLGIVAGLLLYAL. Residues 386–430 lie on the Cytoplasmic side of the membrane; that stretch reads GSKKIQEETDLLESPLIDDAESEHELLSTGTEKLMRSEICHDLFT.

Belongs to the CRT-like transporter family.

The protein resides in the vacuole membrane. In terms of biological role, nutrient transporter. Involved in maintaining the osmotic homeostasis of the digestive vacuole. This Theileria annulata protein is Putative chloroquine resistance transporter.